The following is a 747-amino-acid chain: MAARKNQKSPKPKVASSKLKNIKKSSKRNNSQSSTEPRKNATSLDSKKTTKKGVALPEIAERELTQEDIEFFNENPSSLKYLSSINPEDLGKKVEKGPRPDIYDLKKSQQFELDTSRLSSDEESVLDYSKDSEDEQDYELRPRVSSSWNNESYNRLPIKTKDGLLQNVVADVNNGEEFLSESESEASLEIDSDIKDEKQKSLEEQKIAPEIPVKQQIKNDKEALGIQAQQLLEEPVENLHLIRNIFEKFDSPYITIKKLSLLTLLAVFRDIIPGYKIRPLSEEEQGTKLSKEVAQRWEYEQTLLKHYAKFLQTLETILKSFSSTLDETQLSLYQVAVRCCTKLIEQASHFNLSEKLFALAVRQISHKTKRPGFDGIINSLKNIFEEDNLGKTSLKCVTILSRMFKQRNYDVLPDVYDLFLSVNILNDMKIKDEAWQDDTTNFKKRKKDLPYLTKKARKNYKETKKITQEMKEADAVITAQDKEKYQSEILKIIFITYFKTLQLKGKLIGNALEGVARLSHLLNIEFLGDLLQVLRELVMDDTVFLPKDKSGVQATREALLTVSTAFEIASAQGVGKLNLDLDLGLFVQRLYKIIFPFSLNPDADLNLKIKRLKDPDAPSKPFVVNATTEMEMLLKCFQVFFFKSKNISSSRLSSFSKRLAIASMQLPEHSASADLALLKKLLSRYSKLSRLLTSEEQIGDGIYNPFIEDPDLSNSSTAVLYEPFLLKNHYSPAVSQSAKELLKSTSL.

The segment covering 1-11 has biased composition (basic residues); it reads MAARKNQKSPK. A disordered region spans residues 1–142; the sequence is MAARKNQKSP…EDEQDYELRP (142 aa). Residues 74–86 show a composition bias toward polar residues; that stretch reads ENPSSLKYLSSIN. A compositionally biased stretch (basic and acidic residues) spans 89-109; sequence DLGKKVEKGPRPDIYDLKKSQ. At Ser-120 the chain carries Phosphoserine. A coiled-coil region spans residues 214–234; the sequence is KQQIKNDKEALGIQAQQLLEE.

It belongs to the CBF/MAK21 family.

The protein resides in the nucleus. The protein localises to the nucleolus. May be required for synthesis of 60S ribosomal subunits and the transport of pre-ribosomes from the nucleoplasm to the cytoplasm. The polypeptide is Nucleolar complex-associated protein 3 (noc3) (Schizosaccharomyces pombe (strain 972 / ATCC 24843) (Fission yeast)).